Here is a 350-residue protein sequence, read N- to C-terminus: Protein-glutamate methylesterase/protein-glutamine glutaminase (350 aa).

Positions 5–122 constitute a Response regulatory domain; it reads KVLCVDDSAL…RDGLIEYSEV (118 aa). Aspartate 56 bears the 4-aspartylphosphate mark. In terms of domain architecture, CheB-type methylesterase spans 152–346; that stretch reads PFASSEKLVI…ERILTRLGDR (195 aa). Residues serine 165, histidine 191, and aspartate 288 contribute to the active site.

The protein belongs to the CheB family. In terms of processing, phosphorylated by CheA. Phosphorylation of the N-terminal regulatory domain activates the methylesterase activity.

Its subcellular location is the cytoplasm. The enzyme catalyses [protein]-L-glutamate 5-O-methyl ester + H2O = L-glutamyl-[protein] + methanol + H(+). It catalyses the reaction L-glutaminyl-[protein] + H2O = L-glutamyl-[protein] + NH4(+). In terms of biological role, involved in chemotaxis. Part of a chemotaxis signal transduction system that modulates chemotaxis in response to various stimuli. Catalyzes the demethylation of specific methylglutamate residues introduced into the chemoreceptors (methyl-accepting chemotaxis proteins or MCP) by CheR. Also mediates the irreversible deamidation of specific glutamine residues to glutamic acid. This Bordetella parapertussis (strain 12822 / ATCC BAA-587 / NCTC 13253) protein is Protein-glutamate methylesterase/protein-glutamine glutaminase.